The sequence spans 156 residues: Cyclic pyranopterin monophosphate synthase (156 aa).

Substrate-binding positions include 73–75 (LCH) and 110–111 (ME). Asp-125 is a catalytic residue.

The protein belongs to the MoaC family. Homohexamer; trimer of dimers.

The enzyme catalyses (8S)-3',8-cyclo-7,8-dihydroguanosine 5'-triphosphate = cyclic pyranopterin phosphate + diphosphate. It functions in the pathway cofactor biosynthesis; molybdopterin biosynthesis. Functionally, catalyzes the conversion of (8S)-3',8-cyclo-7,8-dihydroguanosine 5'-triphosphate to cyclic pyranopterin monophosphate (cPMP). This Pseudomonas putida (strain GB-1) protein is Cyclic pyranopterin monophosphate synthase.